A 477-amino-acid chain; its full sequence is Glycogen synthase (477 aa).

K15 is an ADP-alpha-D-glucose binding site.

Belongs to the glycosyltransferase 1 family. Bacterial/plant glycogen synthase subfamily.

It carries out the reaction [(1-&gt;4)-alpha-D-glucosyl](n) + ADP-alpha-D-glucose = [(1-&gt;4)-alpha-D-glucosyl](n+1) + ADP + H(+). It participates in glycan biosynthesis; glycogen biosynthesis. Its function is as follows. Synthesizes alpha-1,4-glucan chains using ADP-glucose. The sequence is that of Glycogen synthase from Citrobacter koseri (strain ATCC BAA-895 / CDC 4225-83 / SGSC4696).